The following is a 451-amino-acid chain: Phosphoglucosamine mutase (451 aa).

Serine 101 serves as the catalytic Phosphoserine intermediate. Residues serine 101, aspartate 240, aspartate 242, and aspartate 244 each contribute to the Mg(2+) site. The residue at position 101 (serine 101) is a Phosphoserine.

The protein belongs to the phosphohexose mutase family. Mg(2+) serves as cofactor. Post-translationally, activated by phosphorylation.

The enzyme catalyses alpha-D-glucosamine 1-phosphate = D-glucosamine 6-phosphate. Its function is as follows. Catalyzes the conversion of glucosamine-6-phosphate to glucosamine-1-phosphate. The chain is Phosphoglucosamine mutase from Streptococcus pyogenes serotype M1.